The chain runs to 452 residues: Bifunctional protein GlmU (452 aa).

The segment at M1–R226 is pyrophosphorylase. Residues L8–G11, K22, Q73, G78–T79, Y99–D101, G136, E151, N166, and N224 each bind UDP-N-acetyl-alpha-D-glucosamine. D101 is a Mg(2+) binding site. N224 contributes to the Mg(2+) binding site. Positions I227–Q247 are linker. The segment at G248 to K452 is N-acetyltransferase. Positions 330 and 348 each coordinate UDP-N-acetyl-alpha-D-glucosamine. H360 (proton acceptor) is an active-site residue. Residues Y363 and N374 each coordinate UDP-N-acetyl-alpha-D-glucosamine. Acetyl-CoA is bound by residues A377, N383 to Y384, S402, A420, and R437.

The protein in the N-terminal section; belongs to the N-acetylglucosamine-1-phosphate uridyltransferase family. In the C-terminal section; belongs to the transferase hexapeptide repeat family. As to quaternary structure, homotrimer. Mg(2+) is required as a cofactor.

It is found in the cytoplasm. It catalyses the reaction alpha-D-glucosamine 1-phosphate + acetyl-CoA = N-acetyl-alpha-D-glucosamine 1-phosphate + CoA + H(+). The catalysed reaction is N-acetyl-alpha-D-glucosamine 1-phosphate + UTP + H(+) = UDP-N-acetyl-alpha-D-glucosamine + diphosphate. The protein operates within nucleotide-sugar biosynthesis; UDP-N-acetyl-alpha-D-glucosamine biosynthesis; N-acetyl-alpha-D-glucosamine 1-phosphate from alpha-D-glucosamine 6-phosphate (route II): step 2/2. It functions in the pathway nucleotide-sugar biosynthesis; UDP-N-acetyl-alpha-D-glucosamine biosynthesis; UDP-N-acetyl-alpha-D-glucosamine from N-acetyl-alpha-D-glucosamine 1-phosphate: step 1/1. It participates in bacterial outer membrane biogenesis; LPS lipid A biosynthesis. Catalyzes the last two sequential reactions in the de novo biosynthetic pathway for UDP-N-acetylglucosamine (UDP-GlcNAc). The C-terminal domain catalyzes the transfer of acetyl group from acetyl coenzyme A to glucosamine-1-phosphate (GlcN-1-P) to produce N-acetylglucosamine-1-phosphate (GlcNAc-1-P), which is converted into UDP-GlcNAc by the transfer of uridine 5-monophosphate (from uridine 5-triphosphate), a reaction catalyzed by the N-terminal domain. This Stutzerimonas stutzeri (strain A1501) (Pseudomonas stutzeri) protein is Bifunctional protein GlmU.